Reading from the N-terminus, the 469-residue chain is MTAPRTLYDKIWDDHVVDVGPDGSALLYIDRHLVHEVTSPQAFEGLRVAGRKVHAPHKTLAVVDHNVQTSDRSKGIEDPESRTQLEALAENVRDFGIEFYDALDRRQGIVHIIGPEQGFTLPGQTIVCGDSHTSTHGAFGALAHGIGTSEVEHVLATQTLIQRKAKNMRVTVDGTLPPGVSAKDIVLAIIGEIGTAGGTGHVIEYAGEAIRALSMEGRMTICNMSIEGGARAGMVAPDEITYAYVKDRPKAPKGAAFDAARRYWESLVSDEGAQFDREIRLDAANLPPLVSWGTSPEDIVSILGTVPDPAQIADENKRQSKEKALAYMGLTPGMRMTDITLDRVFIGSCTNGRIEDLRIVAKMVEGRKVHDGVSAMVVPGSGLVKAQAEAEGIDRILKDAGFDWREPGCSMCLGMNPDKLRPGERCASTSNRNFEGRQGPRGRTHLVSPAMAAAAAVAGRFVDIREWRG.

3 residues coordinate [4Fe-4S] cluster: cysteine 349, cysteine 409, and cysteine 412.

It belongs to the aconitase/IPM isomerase family. LeuC type 1 subfamily. Heterodimer of LeuC and LeuD. [4Fe-4S] cluster serves as cofactor.

It carries out the reaction (2R,3S)-3-isopropylmalate = (2S)-2-isopropylmalate. Its pathway is amino-acid biosynthesis; L-leucine biosynthesis; L-leucine from 3-methyl-2-oxobutanoate: step 2/4. In terms of biological role, catalyzes the isomerization between 2-isopropylmalate and 3-isopropylmalate, via the formation of 2-isopropylmaleate. This is 3-isopropylmalate dehydratase large subunit from Methylorubrum populi (strain ATCC BAA-705 / NCIMB 13946 / BJ001) (Methylobacterium populi).